The sequence spans 210 residues: Small ribosomal subunit protein uS3 (210 aa).

A KH type-2 domain is found at isoleucine 17–lysine 86.

It belongs to the universal ribosomal protein uS3 family. In terms of assembly, part of the 30S ribosomal subunit.

Its function is as follows. Binds the lower part of the 30S subunit head. This is Small ribosomal subunit protein uS3 from Pyrococcus abyssi (strain GE5 / Orsay).